The chain runs to 391 residues: Chorismate synthase (391 aa).

NADP(+) is bound at residue R48. FMN contacts are provided by residues 126–128, G287, 302–306, and R329; these read RSS and KPTSS.

Belongs to the chorismate synthase family. FMNH2 serves as cofactor.

The catalysed reaction is 5-O-(1-carboxyvinyl)-3-phosphoshikimate = chorismate + phosphate. It functions in the pathway metabolic intermediate biosynthesis; chorismate biosynthesis; chorismate from D-erythrose 4-phosphate and phosphoenolpyruvate: step 7/7. Catalyzes the anti-1,4-elimination of the C-3 phosphate and the C-6 proR hydrogen from 5-enolpyruvylshikimate-3-phosphate (EPSP) to yield chorismate, which is the branch point compound that serves as the starting substrate for the three terminal pathways of aromatic amino acid biosynthesis. This reaction introduces a second double bond into the aromatic ring system. The sequence is that of Chorismate synthase from Sulfolobus acidocaldarius (strain ATCC 33909 / DSM 639 / JCM 8929 / NBRC 15157 / NCIMB 11770).